We begin with the raw amino-acid sequence, 152 residues long: Ribosome maturation factor RimP (152 aa).

The protein belongs to the RimP family.

The protein localises to the cytoplasm. Its function is as follows. Required for maturation of 30S ribosomal subunits. This chain is Ribosome maturation factor RimP, found in Escherichia coli (strain K12 / MC4100 / BW2952).